Reading from the N-terminus, the 316-residue chain is Transmembrane protein 231 (316 aa).

A helical membrane pass occupies residues 23-43; that stretch reads AALFLLLATALTYIPPLLVAF. 3 N-linked (GlcNAc...) asparagine glycosylation sites follow: N194, N199, and N221. A helical membrane pass occupies residues 262 to 282; that stretch reads FWEMIKFAWIQYVSILLIFLW.

Belongs to the TMEM231 family. In terms of assembly, part of the tectonic-like complex (also named B9 complex). Interacts with TMEM107.

Its subcellular location is the cell projection. It localises to the cilium membrane. Transmembrane component of the tectonic-like complex, a complex localized at the transition zone of primary cilia and acting as a barrier that prevents diffusion of transmembrane proteins between the cilia and plasma membranes. Required for ciliogenesis and sonic hedgehog/SHH signaling. The polypeptide is Transmembrane protein 231 (TMEM231) (Bos taurus (Bovine)).